Consider the following 371-residue polypeptide: N-acetyldiaminopimelate deacetylase (371 aa).

D68 is a catalytic residue. The active-site Proton acceptor is E127.

The protein belongs to the peptidase M20A family. N-acetyldiaminopimelate deacetylase subfamily.

The enzyme catalyses N-acetyl-(2S,6S)-2,6-diaminopimelate + H2O = (2S,6S)-2,6-diaminopimelate + acetate. The protein operates within amino-acid biosynthesis; L-lysine biosynthesis via DAP pathway; LL-2,6-diaminopimelate from (S)-tetrahydrodipicolinate (acetylase route): step 3/3. In terms of biological role, catalyzes the conversion of N-acetyl-diaminopimelate to diaminopimelate and acetate. The sequence is that of N-acetyldiaminopimelate deacetylase from Listeria innocua serovar 6a (strain ATCC BAA-680 / CLIP 11262).